Here is a 763-residue protein sequence, read N- to C-terminus: Ribonucleoside-diphosphate reductase subunit alpha (763 aa).

Positions 5–95 (LFVTKRNGKK…IFHLRKKAYG (91 aa)) constitute an ATP-cone domain. ATP is bound by residues lysine 9, 15 to 21 (EKINLDK), threonine 55, and lysine 91. Threonine 209 is a GDP binding site. Residues cysteine 225 and cysteine 462 are joined by a disulfide bond. Residues 232–234 (DNL), arginine 262, and arginine 269 each bind dTTP. Position 437 (asparagine 437) interacts with GDP. The active-site Proton acceptor is the asparagine 437. Cysteine 439 functions as the Cysteine radical intermediate in the catalytic mechanism. Residues glutamate 441 and 623 to 625 (ETS) each bind GDP. Residue glutamate 441 is the Proton acceptor of the active site.

Belongs to the ribonucleoside diphosphate reductase large chain family. As to quaternary structure, tetramer of two alpha and two beta subunits.

It catalyses the reaction a 2'-deoxyribonucleoside 5'-diphosphate + [thioredoxin]-disulfide + H2O = a ribonucleoside 5'-diphosphate + [thioredoxin]-dithiol. Its activity is regulated as follows. Under complex allosteric control mediated by deoxynucleoside triphosphates and ATP binding to separate specificity and activation sites on the alpha subunit. The type of nucleotide bound at the specificity site determines substrate preference. It seems probable that ATP makes the enzyme reduce CDP and UDP, dGTP favors ADP reduction and dTTP favors GDP reduction. Stimulated by ATP and inhibited by dATP binding to the activity site. Its function is as follows. Provides the precursors necessary for DNA synthesis. Catalyzes the biosynthesis of deoxyribonucleotides from the corresponding ribonucleotides. This Buchnera aphidicola subsp. Schizaphis graminum (strain Sg) protein is Ribonucleoside-diphosphate reductase subunit alpha (nrdA).